Reading from the N-terminus, the 258-residue chain is UPF0246 protein Sden_2729 (258 aa).

The protein belongs to the UPF0246 family.

The polypeptide is UPF0246 protein Sden_2729 (Shewanella denitrificans (strain OS217 / ATCC BAA-1090 / DSM 15013)).